The primary structure comprises 1011 residues: Protein argonaute 1C (1011 aa).

Residues 1-11 (MASRRPTHRHH) show a composition bias toward basic residues. Disordered stretches follow at residues 1-95 (MASR…SPLA) and 107-147 (RPSE…PLRP). Composition is skewed to low complexity over residues 28–53 (ARYA…ARGA) and 61–92 (QQQQ…ASSS). Residues 127 to 140 (ATTTPHHIPSSSKS) show a composition bias toward polar residues. The 111-residue stretch at 352–462 (PVIDFVAQLL…LPMEVCKIVE (111 aa)) folds into the PAZ domain. The 322-residue stretch at 638 to 959 (LLIGILPDNN…AAFRARFYME (322 aa)) folds into the Piwi domain. Positions 963-982 (SDSSSVVSGPGVRGPLSGSS) are enriched in low complexity. Residues 963–994 (SDSSSVVSGPGVRGPLSGSSTSRTRAPGGAAV) are disordered.

The protein belongs to the argonaute family. Ago subfamily.

Its function is as follows. Probably involved in the RNA silencing pathway. May bind to short RNAs such as microRNAs (miRNAs) or short interfering RNAs (siRNAs), and represses the translation of mRNAs which are complementary to them. This is Protein argonaute 1C (AGO1C) from Oryza sativa subsp. japonica (Rice).